The chain runs to 570 residues: Sulfite reductase [NADPH] hemoprotein beta-component (570 aa).

The [4Fe-4S] cluster site is built by cysteine 434, cysteine 440, cysteine 479, and cysteine 483. Position 483 (cysteine 483) interacts with siroheme.

It belongs to the nitrite and sulfite reductase 4Fe-4S domain family. In terms of assembly, alpha(8)-beta(8). The alpha component is a flavoprotein, the beta component is a hemoprotein. Siroheme is required as a cofactor. Requires [4Fe-4S] cluster as cofactor.

It carries out the reaction hydrogen sulfide + 3 NADP(+) + 3 H2O = sulfite + 3 NADPH + 4 H(+). The protein operates within sulfur metabolism; hydrogen sulfide biosynthesis; hydrogen sulfide from sulfite (NADPH route): step 1/1. Functionally, component of the sulfite reductase complex that catalyzes the 6-electron reduction of sulfite to sulfide. This is one of several activities required for the biosynthesis of L-cysteine from sulfate. This Salmonella schwarzengrund (strain CVM19633) protein is Sulfite reductase [NADPH] hemoprotein beta-component.